Reading from the N-terminus, the 602-residue chain is Elongation factor 4 (602 aa).

Residues 2 to 184 (NHIRNFSIIA…LIVAKVPAPR (183 aa)) form the tr-type G domain. GTP-binding positions include 14–19 (DHGKST) and 131–134 (NKMD).

It belongs to the TRAFAC class translation factor GTPase superfamily. Classic translation factor GTPase family. LepA subfamily.

The protein resides in the cell inner membrane. It catalyses the reaction GTP + H2O = GDP + phosphate + H(+). In terms of biological role, required for accurate and efficient protein synthesis under certain stress conditions. May act as a fidelity factor of the translation reaction, by catalyzing a one-codon backward translocation of tRNAs on improperly translocated ribosomes. Back-translocation proceeds from a post-translocation (POST) complex to a pre-translocation (PRE) complex, thus giving elongation factor G a second chance to translocate the tRNAs correctly. Binds to ribosomes in a GTP-dependent manner. This is Elongation factor 4 from Paracidovorax citrulli (strain AAC00-1) (Acidovorax citrulli).